The sequence spans 308 residues: RNA pseudouridylate synthase domain-containing protein 1 (308 aa).

Residue methionine 1 is modified to N-acetylmethionine. The active site involves aspartate 67. Residues alanine 257 to arginine 292 are disordered. Residues proline 269–glutamate 287 show a composition bias toward pro residues.

Belongs to the pseudouridine synthase RluA family.

The sequence is that of RNA pseudouridylate synthase domain-containing protein 1 (RPUSD1) from Bos taurus (Bovine).